A 579-amino-acid polypeptide reads, in one-letter code: Copine-E (579 aa).

C2 domains are found at residues 45 to 175 (IDPS…KVIG) and 183 to 304 (QTGT…EFTL). Ca(2+) is bound by residues aspartate 80, aspartate 86, aspartate 145, aspartate 147, and aspartate 153. The VWFA domain occupies 345–552 (NLMIAIDCTA…KKYENDPEQL (208 aa)).

This sequence belongs to the copine family. Requires Ca(2+) as cofactor.

This is Copine-E (cpnE) from Dictyostelium discoideum (Social amoeba).